The primary structure comprises 282 residues: 2-dehydro-3-deoxyphosphooctonate aldolase (282 aa).

It belongs to the KdsA family.

Its subcellular location is the cytoplasm. The catalysed reaction is D-arabinose 5-phosphate + phosphoenolpyruvate + H2O = 3-deoxy-alpha-D-manno-2-octulosonate-8-phosphate + phosphate. It participates in carbohydrate biosynthesis; 3-deoxy-D-manno-octulosonate biosynthesis; 3-deoxy-D-manno-octulosonate from D-ribulose 5-phosphate: step 2/3. The protein operates within bacterial outer membrane biogenesis; lipopolysaccharide biosynthesis. The chain is 2-dehydro-3-deoxyphosphooctonate aldolase from Shewanella baltica (strain OS223).